The following is a 93-amino-acid chain: Molybdopterin synthase sulfur carrier subunit (93 aa).

A 1-thioglycine; alternate modification is found at Gly93. At Gly93 the chain carries Glycyl adenylate; alternate.

Belongs to the MoaD family. MOCS2A subfamily. Heterotetramer; composed of 2 small (MOCS2A) and 2 large (MOCS2B) subunits. In terms of processing, C-terminal thiocarboxylation occurs in 2 steps, it is first acyl-adenylated (-COAMP) via the hesA/moeB/thiF part of UBA4, then thiocarboxylated (-COSH) via the rhodanese domain of UBA4.

The protein resides in the cytoplasm. It functions in the pathway cofactor biosynthesis; molybdopterin biosynthesis. In terms of biological role, acts as a sulfur carrier required for molybdopterin biosynthesis. Component of the molybdopterin synthase complex that catalyzes the conversion of precursor Z into molybdopterin by mediating the incorporation of 2 sulfur atoms into precursor Z to generate a dithiolene group. In the complex, serves as sulfur donor by being thiocarboxylated (-COSH) at its C-terminus by UBA4. After interaction with MOCS2B, the sulfur is then transferred to precursor Z to form molybdopterin. In Mycosarcoma maydis (Corn smut fungus), this protein is Molybdopterin synthase sulfur carrier subunit.